Reading from the N-terminus, the 345-residue chain is GTPase Obg (345 aa).

Positions Met-1 to Ile-158 constitute an Obg domain. Residues Ala-159–Lys-339 form the OBG-type G domain. GTP is bound by residues Gly-165–Ser-172, Phe-190–Thr-194, Asp-212–Gly-215, Ser-280–Asp-283, and Ser-320–Leu-322. 2 residues coordinate Mg(2+): Ser-172 and Thr-192.

The protein belongs to the TRAFAC class OBG-HflX-like GTPase superfamily. OBG GTPase family. As to quaternary structure, monomer. The cofactor is Mg(2+).

It is found in the cytoplasm. An essential GTPase which binds GTP, GDP and possibly (p)ppGpp with moderate affinity, with high nucleotide exchange rates and a fairly low GTP hydrolysis rate. Plays a role in control of the cell cycle, stress response, ribosome biogenesis and in those bacteria that undergo differentiation, in morphogenesis control. In Campylobacter jejuni subsp. jejuni serotype O:6 (strain 81116 / NCTC 11828), this protein is GTPase Obg.